The chain runs to 856 residues: MSLSPQGADMSGVLYLGRFTLCLLPVSCFSQKVMTCADTVRGAQEVFMLCIYVELPYYYQLTRIFPADIESLCARMRRFAVHNGAALHEASSVRIFAFEAHSLGSVYAAVRCVRALYQTLDTYEKQVKEFRILMDVVADDASPCLIEDRFHAYRSTLIPDRGFFASFRAKQLLKHYLEFLPLPALNMYQVNGFLSLCAEKPFPQGVTTHCIVVRTTSSYMSALCNFMALHPLSEAVYSTLSEETRAFFFHLRAAVSFFKRRRYDSSFPQYLTDAFLQYVGLYFKLYYEAAPNAAPPPIYVDPCAGHESQKQAEKVLIVSPHSPLMRLPASCADIEAIPQDLAEVMYTLSLASRYIFADEIEEFFLFLKKHADFVGDLFDKMFCTQVTMVPHNAYAIPEDVHDSLEKRVRVKMPVIRECISSFLWKKYQEGSLCASTDLLRTFQELQYKYTSDCVLHSLFHTYSDVQIAHLQVEEYTGTDVGAVLKVYQHTLLVGMREDAEAAFREAKACLTTLQARRFVSAEYRTFSLLGFLTIGQSKFEDALVYFGYALDDAEQLRDGDFLCSALFHLSITYFLQHNFTQARLFLSKLSDAISTYFEQRWKTVSLFMQGRISLSLGEYAQARRCFDEAADFALQYFEHQEPLCRVWAAHARLLADKSYAAHALFQDMCDQYPDAYLFLVESYVRAECFDDPTLFQSFPEETTSREPCVPSFSLDTPIYSGFSCAEDLVWGRQCAFAVSAQHSTVFAHYYHCRVHLHRAEDMQTFHHHKQKLEAIARRAFQIGDPSAALFLYLCYDVSYRVHGAEAAVTTAHLSRAFKVMQRSVAYMSENTVRAQFMQDNFWNAKLFAAAQANKLI.

TPR repeat units lie at residues 107-140 (YAAVRCVRALYQTLDTYEKQVKEFRILMDVVADD), 523-556 (YRTFSLLGFLTIGQSKFEDALVYFGYALDDAEQL), and 603-636 (TVSLFMQGRISLSLGEYAQARRCFDEAADFALQY).

The polypeptide is TPR repeat-containing protein TP_0123 (Treponema pallidum (strain Nichols)).